The primary structure comprises 138 residues: Basic phospholipase A2 homolog MjTX-I (138 aa).

An N-terminal signal peptide occupies residues 1–16 (MRTLWIMAVLLVGVEG). Position 34 (valine 34) interacts with suramin. 7 disulfides stabilise this stretch: cysteine 42–cysteine 132, cysteine 44–cysteine 60, cysteine 59–cysteine 111, cysteine 65–cysteine 138, cysteine 66–cysteine 104, cysteine 73–cysteine 97, and cysteine 91–cysteine 102. Residue asparagine 43 participates in varespladib binding. Positions 45 and 48 each coordinate suramin. Varespladib contacts are provided by histidine 63 and lysine 64. Residue lysine 85 participates in suramin binding.

Belongs to the phospholipase A2 family. Group II subfamily. K49 sub-subfamily. In terms of assembly, monomer in solution. Homodimer; non-covalently linked (probable conventional/extended dimer conformation). Homotetramer (dimer of homodimer (probable conventional/extended dimer conformation)); non-covalently linked. Homooligomer. Expressed by the venom gland.

Its subcellular location is the secreted. With respect to regulation, myotoxin activity is inhibited by suramin and varespladib. Inhibition by suramin may be caused by (i) distortion of MDiS from both monomers impairing the membrane disruption mechanism by the toxin and (ii) surface electrostatic changes of the complex that interfere with the toxin membrane dockage process (putative-MDoS is partially hidden). Inhibition by varespladib is probably through varespladib binding to MDoS. Functionally, snake venom phospholipase A2 homolog that lacks enzymatic activity. In vivo, it displays local myotoxin and edema-inducing activities and is lethal by intraperitoneal injection. The myotoxicity effect is weaker in comparison to other myotoxins, probably due to the formation of high molecular weight complexes and to the oligomeric conformation (conventional dimer). It shows specificity toward neurons and myotubes, but not on a variety of other cell types. This PLA2 excites a cohort of sensory neurons via ATP release and consequent activation of P2RX2 and/or P2RX3 purinergic receptors. Pannexin hemichannels act as downstream mediators of toxin-evoked ATP release. In vivo, it elicits nonneurogenic inflammatory pain, thermal hyperalgesia, and mechanical allodynia, of which the latter is completely dependent on purinergic signaling. This Bothrops moojeni (Lance-headed viper) protein is Basic phospholipase A2 homolog MjTX-I.